A 205-amino-acid chain; its full sequence is Ribosomal RNA small subunit methyltransferase G (205 aa).

Residues Gly66, Phe71, 119–120 (IE), and Arg135 each bind S-adenosyl-L-methionine.

The protein belongs to the methyltransferase superfamily. RNA methyltransferase RsmG family.

The protein resides in the cytoplasm. It catalyses the reaction guanosine(527) in 16S rRNA + S-adenosyl-L-methionine = N(7)-methylguanosine(527) in 16S rRNA + S-adenosyl-L-homocysteine. Functionally, specifically methylates the N7 position of guanine in position 527 of 16S rRNA. The sequence is that of Ribosomal RNA small subunit methyltransferase G from Rhizobium rhizogenes (strain K84 / ATCC BAA-868) (Agrobacterium radiobacter).